Consider the following 90-residue polypeptide: MRSASLILFVAIVALTYARSYEDIKEEIRNEVENEILDDLEEENDELDDNAQEVSDPRARRWRRAFRRIRIRQVVPYIPHIIKAYQTGKK.

The N-terminal stretch at 1–18 (MRSASLILFVAIVALTYA) is a signal peptide. A propeptide spanning residues 19-59 (RSYEDIKEEIRNEVENEILDDLEEENDELDDNAQEVSDPRA) is cleaved from the precursor. Thr-87 is modified (threonine amide).

This sequence belongs to the arminin family. As to expression, expressed in entodermal epithelium along the body column.

It is found in the secreted. The protein resides in the target cell membrane. Its function is as follows. Antimicrobial peptide with a broad-spectrum antimicrobial activity. Keeps its antibacterial activity under a wide range of salt concentrations that mimic physiological conditions of human blood, which is surprising, since Hydra is an obligate freshwater animal with nearly no salt tolerance. Does not affect red blood cells. This is Arminin 7722 from Hydra vulgaris (Hydra).